Consider the following 472-residue polypeptide: Transcriptional activator protein rec16 (472 aa).

A C2H2-type zinc finger spans residues 420 to 444 (FICCYCTKPFLSISKLQEHESSCSH).

It localises to the nucleus. Transcriptional activator that controls the onset of premeiotic DNA synthesis by regulating res2 and some other factor(s) in a mei2 independent cascade. This Schizosaccharomyces pombe (strain 972 / ATCC 24843) (Fission yeast) protein is Transcriptional activator protein rec16 (rec16).